The following is a 731-amino-acid chain: Small conductance calcium-activated potassium channel protein 3 (731 aa).

Residues 1-11 (MDTSGHFHDSG) are compositionally biased toward basic and acidic residues. 2 disordered regions span residues 1–170 (MDTS…SNPF) and 239–258 (ATHN…FPKA). A compositionally biased stretch (low complexity) spans 30 to 40 (QQQQQQQQQQQ). The segment covering 41 to 51 (QPPPPAPPAAP) has biased composition (pro residues). Residues 52-95 (QQPLGPSLQPQPPQLQQQQQQQQQQQQQQPPHPLSQLAQLQSQP) are compositionally biased toward low complexity. Over residues 112–132 (PSSNSTAILHPSSRQGSQLNL) the composition is skewed to polar residues. Positions 138–147 (GHSPSSTATS) are enriched in low complexity. Serine 167 carries the post-translational modification Phosphoserine. Over residues 239–256 (ATHNHQHAGTTASSTTFP) the composition is skewed to polar residues. A helical transmembrane segment spans residues 288–308 (LIFGMFGIVVMVIETELSWGL). A helical transmembrane segment spans residues 315 to 335 (FSLALKCLISLSTIILLGLII). The chain crosses the membrane as a helical span at residues 366 to 386 (ISLEMLVCAIHPIPGEYKFFW). Residues 405–425 (IILSIPMFLRLYLIARVMLLH) form a helical membrane-spanning segment. The chain crosses the membrane as a helical span at residues 454-474 (LMTICPGTVLLVFSISLWIIA). An intramembrane region (pore-forming) is located at residues 494 to 514 (FLGAMWLISITFLSIGYGDMV). A helical transmembrane segment spans residues 523-543 (VCLLTGIMGAGCTALVVAVVA). A calmodulin-binding region spans residues 561–637 (DTQLTKRIKN…LVDLSKMQNV (77 aa)). Residues 642-669 (ITELNDRSEDLEKQIGSLESKLEHLTAS) are a coiled coil. Positions 709-731 (ISDSPIGVSSTSFPTPYTSSSSC) are disordered. Low complexity predominate over residues 717-731 (SSTSFPTPYTSSSSC).

Belongs to the potassium channel KCNN family. KCa2.3/KCNN3 subfamily. As to quaternary structure, homodimer. Heteromultimer with KCNN2 or KCNN1; this modulates plasma membrane expression and consequently the small conductance calcium-activated potassium channel activity. The complex is composed of 4 channel subunits each of which binds to a calmodulin subunit which regulates the channel activity through calcium-binding. Interacts with CALM1. In terms of tissue distribution, widely distributed in human tissues and is present at 20-60% of KCNN3 in the brain.

It is found in the cell membrane. It localises to the cytoplasm. The protein resides in the myofibril. Its subcellular location is the sarcomere. The protein localises to the z line. It catalyses the reaction K(+)(in) = K(+)(out). With respect to regulation, inhibited by bee venom neurotoxin apamin. Its function is as follows. Small conductance calcium-activated potassium channel that mediates the voltage-independent transmembrane transfer of potassium across the cell membrane through a constitutive interaction with calmodulin which binds the intracellular calcium allowing its opening. The current is characterized by a voltage-independent activation, an intracellular calcium concentration increase-dependent activation and a single-channel conductance of 10 picosiemens. Also presents an inwardly rectifying current, thus reducing its already small outward conductance of potassium ions, which is particularly the case when the membrane potential displays positive values, above + 20 mV. Activation is followed by membrane hyperpolarization. Thought to regulate neuronal excitability by contributing to the slow component of synaptic afterhyperpolarization. Functionally, does not function as a small conductance calcium-activated potassium channel. Selectively suppresses endogenous KCNN3 currents, in a dominant-negative fashion by decreasing the abundance of functional channels in the plasma membrane, possibly by selectively coassembling with and sequestering native KCNN3 protein in intracellular compartments. This dominant inhibitory effect extends to other members of the SK subfamily. The chain is Small conductance calcium-activated potassium channel protein 3 from Homo sapiens (Human).